The following is a 302-amino-acid chain: DDRGK domain-containing protein 1 (302 aa).

The chain crosses the membrane as a helical span at residues 1–21 (MDPLLLGSVGVLVLAVTLIIW). The Cytoplasmic portion of the chain corresponds to 22–302 (RLLKLQWDEK…IRLETPSAAE (281 aa)). Positions 101–178 (EYDEDGKKIG…EREEKERKEH (78 aa)) are disordered. The span at 118–178 (QAKEEKRQMR…EREEKERKEH (61 aa)) shows a compositional bias: basic and acidic residues.

This sequence belongs to the DDRGK1 family.

Its subcellular location is the endoplasmic reticulum membrane. Functionally, substrate adapter for ufmylation, the covalent attachment of the ubiquitin-like modifier ufm-1 to substrate proteins. The chain is DDRGK domain-containing protein 1 from Caenorhabditis elegans.